The primary structure comprises 435 residues: U-box domain-containing protein 36 (435 aa).

Residues 227–345 (EAEASKRKAR…LKGKREEEEA (119 aa)) adopt a coiled-coil conformation. The region spanning 352-426 (EPPQYFICPI…QEWLQLRELL (75 aa)) is the U-box domain.

The catalysed reaction is S-ubiquitinyl-[E2 ubiquitin-conjugating enzyme]-L-cysteine + [acceptor protein]-L-lysine = [E2 ubiquitin-conjugating enzyme]-L-cysteine + N(6)-ubiquitinyl-[acceptor protein]-L-lysine.. It participates in protein modification; protein ubiquitination. In terms of biological role, functions as an E3 ubiquitin ligase. The sequence is that of U-box domain-containing protein 36 (PUB36) from Arabidopsis thaliana (Mouse-ear cress).